The primary structure comprises 265 residues: Undecaprenyl-diphosphatase 1 (265 aa).

The next 7 helical transmembrane spans lie at Ile4–Ser24, Ala42–His62, Phe84–Ile104, Leu108–Ala128, Ser184–Leu204, Met217–Leu237, and Leu245–Leu265.

The protein belongs to the UppP family.

Its subcellular location is the cell membrane. The enzyme catalyses di-trans,octa-cis-undecaprenyl diphosphate + H2O = di-trans,octa-cis-undecaprenyl phosphate + phosphate + H(+). Catalyzes the dephosphorylation of undecaprenyl diphosphate (UPP). Confers resistance to bacitracin. This Bacillus thuringiensis (strain Al Hakam) protein is Undecaprenyl-diphosphatase 1.